The primary structure comprises 235 residues: Small ribosomal subunit protein uS3 (235 aa).

A KH type-2 domain is found at 39–107; the sequence is VRKFLNKELA…PAQINIAEVK (69 aa). The disordered stretch occupies residues 215-235; the sequence is AQSEQQPADKPKKAPRGKGRK.

This sequence belongs to the universal ribosomal protein uS3 family. Part of the 30S ribosomal subunit. Forms a tight complex with proteins S10 and S14.

Its function is as follows. Binds the lower part of the 30S subunit head. Binds mRNA in the 70S ribosome, positioning it for translation. This Haemophilus influenzae (strain PittEE) protein is Small ribosomal subunit protein uS3.